Here is a 460-residue protein sequence, read N- to C-terminus: Keratin, type I cytoskeletal 27 (460 aa).

A head region spans residues 1-83 (MSVRFSSASR…GNEHGLLSGN (83 aa)). The segment at 84-119 (EKVTMQNLNDRLASYLDNVRALEEANADLEQKIKGW) is coil 1A. Residues 84–399 (EKVTMQNLND…RLIDGEDGSC (316 aa)) form the IF rod domain. A linker 1 region spans residues 120–141 (YEKFGPGSCRGLDHDYSRYFTV). The segment at 142–233 (IDDLRNQIIS…KNHEEEMKAL (92 aa)) is coil 1B. The interval 234-256 (QCAAGGNVNVEMNAAPGVDLTVL) is linker 12. A coil 2 region spans residues 257–395 (LNNMRAEYEA…ETYCRLIDGE (139 aa)). The interval 396–460 (DGSCTKSKGY…NMKSEQRVPS (65 aa)) is tail. Residues 429–460 (DPRGKVPSSRVHTVEEKSTKVNNMKSEQRVPS) are disordered. The segment covering 448 to 460 (KVNNMKSEQRVPS) has biased composition (polar residues).

It belongs to the intermediate filament family. In terms of assembly, heterotetramer of two type I and two type II keratins. Interacts with KRT6A to form filaments.

Its subcellular location is the cytoplasm. Essential for the proper assembly of type I and type II keratin protein complexes and formation of keratin intermediate filaments in the inner root sheath (irs). This is Keratin, type I cytoskeletal 27 from Capra hircus (Goat).